Here is a 97-residue protein sequence, read N- to C-terminus: Putative septation protein SpoVG (97 aa).

This sequence belongs to the SpoVG family.

Its function is as follows. Essential for sporulation. Interferes with or is a negative regulator of the pathway leading to asymmetric septation. The sequence is that of Putative septation protein SpoVG from Bacillus licheniformis (strain ATCC 14580 / DSM 13 / JCM 2505 / CCUG 7422 / NBRC 12200 / NCIMB 9375 / NCTC 10341 / NRRL NRS-1264 / Gibson 46).